A 364-amino-acid polypeptide reads, in one-letter code: Formate dehydrogenase (364 aa).

Residues Val93 and Asn119 each contribute to the substrate site. Residues 174–175 (RI), Asp195, 230–234 (PLHAG), Thr256, Asp282, and 311–314 (HYSG) contribute to the NAD(+) site.

This sequence belongs to the D-isomer specific 2-hydroxyacid dehydrogenase family. FDH subfamily. As to quaternary structure, homodimer.

The protein resides in the cytoplasm. It carries out the reaction formate + NAD(+) = CO2 + NADH. Its activity is regulated as follows. Cu(2+), Hg and p-chloromercuribenzoate are strong inhibitors of enzyme activity and Ca(2+), Mg(2+), Zn(2+), Mn(2+), Cd(2+) and Sn(2+) have no effect on activity indicating a cysteine residue in the protein is essential for enzyme activity or to maintain the proper structure of the enzyme. Nitrite and nitrate inhibit some enzyme activity, however cyanide, azide, thiocyanate and cyanate are strong inhibitors of the enzymatic reaction. The inhibition of cyanide is competitive with formate and reversible. Catalyzes the NAD(+)-dependent oxidation of formate to carbon dioxide. Formate oxidation is the final step in the methanol oxidation pathway in methylotrophic microorganisms. Has a role in the detoxification of exogenous formate in non-methylotrophic organisms. The protein is Formate dehydrogenase of Candida boidinii (Yeast).